We begin with the raw amino-acid sequence, 595 residues long: MKNIRNFSIIAHIDHGKSTIADCFIQFCGGLSDREMSSQVLDSMDIEKERGITIKSQSVTLDYHAKNGETYQLNFIDTPGHVDFSYEVSRSLSACEGALLIVDASQGVEAQTVANCYTALEQGLQVVSVLNKIDLPAADPERVMDEIEDVIGVEAHDVVHASAKLGIGIEDILEQIVERIPTPKGNINAPIKALIIDSWFDSYLGVVSLIRMIDGEIKIKTKIKIFSNGGEYIVDEVGIFTPKRKRIDSLKAGEVGFLIANIKNIDGAPVGDTITSAENPASESLEGFRPVQPCVFAGIFPISGKDYEKFRDALAKLRLNDAALQYEPENSDVLGFGFRIGFLGLLHMEIVQERLEREYDLDLIITAPTVIYEILDTKGIIHRVDSLSKMPTNQSISKFREPIITAKILVISKYVGAVMNLCIEKRGIQKNIIYMSRQVSLIYELPLNEVVLDFFDRLKSVSRGFASMDYHFERYQESDLICLDVMINQEPVDALALIMHRDDSVRKGNELVEKMKELIPRQMFDVTIQACIGSKIISRSNVKALRKNVTAKCYGGDVSRKKKLLDKQNKGKKRMRSVGRVDIPKEVFLAILHIN.

One can recognise a tr-type G domain in the interval 2–184 (KNIRNFSIIA…QIVERIPTPK (183 aa)). GTP contacts are provided by residues 14–19 (DHGKST) and 131–134 (NKID).

It belongs to the TRAFAC class translation factor GTPase superfamily. Classic translation factor GTPase family. LepA subfamily.

The protein localises to the cell inner membrane. The catalysed reaction is GTP + H2O = GDP + phosphate + H(+). Its function is as follows. Required for accurate and efficient protein synthesis under certain stress conditions. May act as a fidelity factor of the translation reaction, by catalyzing a one-codon backward translocation of tRNAs on improperly translocated ribosomes. Back-translocation proceeds from a post-translocation (POST) complex to a pre-translocation (PRE) complex, thus giving elongation factor G a second chance to translocate the tRNAs correctly. Binds to ribosomes in a GTP-dependent manner. The polypeptide is Elongation factor 4 (Vesicomyosocius okutanii subsp. Calyptogena okutanii (strain HA)).